The primary structure comprises 342 residues: Aristolochene synthase prx2 (342 aa).

Mg(2+) contacts are provided by Asp115, Asn244, Ser248, and Glu252. The (2E,6E)-farnesyl diphosphate site is built by Arg340 and Tyr341.

It belongs to the terpene synthase family. Homodimer. Mg(2+) serves as cofactor.

The catalysed reaction is (2E,6E)-farnesyl diphosphate = (+)-aristolochene + diphosphate. It participates in sesquiterpene biosynthesis; aristolochene biosynthesis; aristolochene from farnesyl diphosphate: step 1/1. Its function is as follows. Aristolochene synthase; part of the gene cluster that mediates the biosynthesis of PR-toxin, a bicyclic sesquiterpene belonging to the eremophilane class and acting as a mycotoxin. The first step of the pathway is catalyzed by the aristolochene synthase which performs the cyclization of trans,trans-farnesyl diphosphate (FPP) to the bicyclic sesquiterpene aristolochene. Following the formation of aristolochene, the non-oxygenated aristolochene is converted to the trioxygenated intermediate eremofortin B, via 7-epi-neopetasone. This conversion appears to involve three enzymes, a hydroxysterol oxidase-like enzyme, the quinone-oxidase prx3 that forms the quinone-type-structure in the bicyclic nucleus of aristolochene with the C8-oxo group and the C-3 hydroxyl group, and the P450 monooxygenase prx9 that introduces the epoxide at the double bond between carbons 1 and 2. No monoxy or dioxy-intermediates have been reported to be released to the broth, so these three early oxidative reactions may be coupled together. Eremofortin B is further oxidized by another P450 monooxygenase, that introduces a second epoxide between carbons 7 and 11 prior to acetylation to eremofortin A by the acetyltransferase prx11. The second epoxidation may be performed by a second P450 monooxygenase. After the acetylation step, the conversion of eremofortin A to eremofortin C and then to PR-toxin requires only two enzymes. First the conversion of eremofortin A to eremofortin C proceeds by oxidation of the side chain of the molecule at C-12 and is catalyzed by the short-chain oxidoreductase prx1. The cytochrome P450 monooxygenase prx8 also plays a role in this step. The primary alcohol formed at C-12 is finally oxidized by the short-chain alcohol dehydrogenase prx4 that forms PR-toxin. This Penicillium rubens (strain ATCC 28089 / DSM 1075 / NRRL 1951 / Wisconsin 54-1255) (Penicillium chrysogenum) protein is Aristolochene synthase prx2.